The chain runs to 90 residues: Probable Fe(2+)-trafficking protein (90 aa).

The protein belongs to the Fe(2+)-trafficking protein family.

In terms of biological role, could be a mediator in iron transactions between iron acquisition and iron-requiring processes, such as synthesis and/or repair of Fe-S clusters in biosynthetic enzymes. This Xylella fastidiosa (strain M23) protein is Probable Fe(2+)-trafficking protein.